A 180-amino-acid polypeptide reads, in one-letter code: NAD(P)H-quinone oxidoreductase subunit I, chloroplastic (180 aa).

4Fe-4S ferredoxin-type domains are found at residues 55–84 (GRIH…VDWR) and 95–124 (LNYS…MTEE). C64, C67, C70, C74, C104, C107, C110, and C114 together coordinate [4Fe-4S] cluster.

Belongs to the complex I 23 kDa subunit family. As to quaternary structure, NDH is composed of at least 16 different subunits, 5 of which are encoded in the nucleus. [4Fe-4S] cluster serves as cofactor.

It localises to the plastid. It is found in the chloroplast thylakoid membrane. The enzyme catalyses a plastoquinone + NADH + (n+1) H(+)(in) = a plastoquinol + NAD(+) + n H(+)(out). The catalysed reaction is a plastoquinone + NADPH + (n+1) H(+)(in) = a plastoquinol + NADP(+) + n H(+)(out). Functionally, NDH shuttles electrons from NAD(P)H:plastoquinone, via FMN and iron-sulfur (Fe-S) centers, to quinones in the photosynthetic chain and possibly in a chloroplast respiratory chain. The immediate electron acceptor for the enzyme in this species is believed to be plastoquinone. Couples the redox reaction to proton translocation, and thus conserves the redox energy in a proton gradient. This chain is NAD(P)H-quinone oxidoreductase subunit I, chloroplastic, found in Triticum aestivum (Wheat).